A 465-amino-acid chain; its full sequence is Zinc finger and BTB domain-containing protein 32 (465 aa).

Positions 29–87 constitute a BTB domain; that stretch reads CDTLITVGGLEFPAHSLVLAGASPRLGCRGRWALVEDISPSTFAQILTFVYGESIELQP. 2 disordered regions span residues 111-179 and 285-310; these read RAQK…EMAG and QNQL…PWQI. Basic and acidic residues-rich tracts occupy residues 123 to 139 and 147 to 176; these read PGLK…RGSE and EKQK…ERPE. 3 C2H2-type zinc fingers span residues 350 to 372, 378 to 400, and 405 to 427; these read YSCS…YRVH, FSCS…LRTH, and YRCP…MRGH.

The protein belongs to the krueppel C2H2-type zinc-finger protein family. As to quaternary structure, homodimer (via PTB domain). Interacts with the N-terminal of FANCC. Interacts with ZBTB16. Interacts with GATA3. Isoform 1 is testis-specific and is not expressed in lymphoid organs such as thymus or spleen. Isoform 2 is expressed in both B- and T-lymphoid cells.

The protein localises to the nucleus. DNA-binding protein that binds to the to a 5'-TGTACAGTGT-3' core sequence. May function as a transcriptional transactivator and transcriptional repressor. Probably exerts its repressor effect by preventing GATA3 from binding to DNA. May play a role in regulating the differentiation and activation of helper T-cells. In Mus musculus (Mouse), this protein is Zinc finger and BTB domain-containing protein 32 (Zbtb32).